Here is a 617-residue protein sequence, read N- to C-terminus: Threonine--tRNA ligase (617 aa).

The tract at residues 209–502 is catalytic; sequence DHRRLGKDLD…MTENYAGDFP (294 aa). Zn(2+)-binding residues include C302, H353, and H479.

The protein belongs to the class-II aminoacyl-tRNA synthetase family. Homodimer. Zn(2+) serves as cofactor.

It is found in the cytoplasm. It catalyses the reaction tRNA(Thr) + L-threonine + ATP = L-threonyl-tRNA(Thr) + AMP + diphosphate + H(+). Its function is as follows. Catalyzes the attachment of threonine to tRNA(Thr) in a two-step reaction: L-threonine is first activated by ATP to form Thr-AMP and then transferred to the acceptor end of tRNA(Thr). Also edits incorrectly charged L-seryl-tRNA(Thr). This chain is Threonine--tRNA ligase, found in Synechococcus sp. (strain CC9311).